Here is a 307-residue protein sequence, read N- to C-terminus: ATP synthase gamma chain (307 aa).

Belongs to the ATPase gamma chain family. In terms of assembly, F-type ATPases have 2 components, CF(1) - the catalytic core - and CF(0) - the membrane proton channel. CF(1) has five subunits: alpha(3), beta(3), gamma(1), delta(1), epsilon(1). CF(0) has three main subunits: a, b and c.

The protein localises to the cell membrane. Produces ATP from ADP in the presence of a proton gradient across the membrane. The gamma chain is believed to be important in regulating ATPase activity and the flow of protons through the CF(0) complex. The chain is ATP synthase gamma chain from Bifidobacterium longum (strain DJO10A).